The chain runs to 815 residues: MDGPRSDVGRWGGNPWQPPTTPSPEPEPEPEPERRSRRGGRSFWARCCGCCSCRNRADDDWGPEPHRDRGSGSGRRRPDSRGSDSRRPGSRASGVNAAGDGTIREGMLVVTGVDLLSSRSDQNRREHHTDEFEYDELIIRRGQPFHMVLHFSRPYESSDRVALELLIGNNPEVGKGTHVIIPVGKGGSGGWKAQVTKASGQNLNLRVHTSPNAIIGKFQFTVRTHSEAGEFQLPFDPHNEIYILFNPWCPEDIVYVDHEDWRQEYVLNESGRIYYGTEAQIGERTWNYGQFDHGVLDACLYILDRRGMPYGGRGDPVSVSRVISAMVNSLDDNGVLIGNWSGDYSRGTNPSAWVGSVEILLSYLRTGYSVPYGQCWVFAGVTTTVLRCLGLATRTVTNFNSAHDTDTSLTMDIYFDENMKPLEHLNHDSVWNFHVWNDCWMKRPDLPSGFDGWQVVDATPQETSSGIFCCGPCSVESIKNGLVYMKYDTPFIFAEVNSDKVYWQRQDDGSFKIVYVEEKAIGTLIVTKAVGSNMQDDVTHIYKHPEGSEAERKAVETAAAHGSKPNVYTNRDSAEDVALQVEAQDAVMGQDLTVSVVLTNRGSSTRTVKLHLYLSVTFYTGVTGPVFKESKKEVVLAPGATERVSMPVAYKEYRPQIVDQGSMLLNVSGHVKENGQVLAKQHTFRLRTPDLSLTLLGAAVVGQECEVQIVFKNPLPVTLTNVVFRLEGSGLQRPKILNVGDIGGNETVTLHQKFVPVRPGPRQLIASLDSPQLSQVHGVIQVDVAPAPGGGGFFSNAGGNSPLGETIPMASRGGA.

Disordered regions lie at residues Met1–Gly40 and Asp59–Asp100. Residues Trp16–Glu25 are compositionally biased toward pro residues. Thr21 carries the phosphothreonine modification. Residues Ser23, Ser80, Ser83, Ser90, and Ser93 each carry the phosphoserine modification. Over residues Asp59–Arg87 the composition is skewed to basic and acidic residues. Catalysis depends on residues Cys375, His434, and Asp457. Residues Asn497, Asp499, Glu546, and Glu551 each contribute to the Ca(2+) site. The tract at residues Ser795 to Ala815 is disordered.

The protein belongs to the transglutaminase superfamily. Transglutaminase family. In terms of assembly, interacts with PLAAT4. Ca(2+) is required as a cofactor. Post-translationally, palmitoylated. The membrane anchorage region possesses a cluster of five cysteines within which fatty acid(s) may become thioester-linked. It is subject to phorbol ester-stimulated phosphorylation and is hypersensitive to proteolysis, which releases the enzyme in a soluble form. In terms of processing, tyrosine-phosphorylated.

It localises to the membrane. It catalyses the reaction L-glutaminyl-[protein] + L-lysyl-[protein] = [protein]-L-lysyl-N(6)-5-L-glutamyl-[protein] + NH4(+). Its function is as follows. Catalyzes the cross-linking of proteins and the conjugation of polyamines to proteins. Responsible for cross-linking epidermal proteins during formation of the stratum corneum. Involved in cell proliferation. The chain is Protein-glutamine gamma-glutamyltransferase K (TGM1) from Canis lupus familiaris (Dog).